We begin with the raw amino-acid sequence, 34 residues long: Photosystem II reaction center protein Psb30 (34 aa).

A helical membrane pass occupies residues valine 6–valine 26.

The protein belongs to the Psb30/Ycf12 family. In terms of assembly, PSII is composed of 1 copy each of membrane proteins PsbA, PsbB, PsbC, PsbD, PsbE, PsbF, PsbH, PsbI, PsbJ, PsbK, PsbL, PsbM, PsbT, PsbX, PsbY, PsbZ, Psb30/Ycf12, peripheral proteins of the oxygen-evolving complex and a large number of cofactors. It forms dimeric complexes.

The protein resides in the plastid. The protein localises to the chloroplast thylakoid membrane. Functionally, a core subunit of photosystem II (PSII), probably helps stabilize the reaction center. In Heterosigma akashiwo (strain NIES-293 / 8280G21-1), this protein is Photosystem II reaction center protein Psb30.